The following is a 599-amino-acid chain: UvrABC system protein C (599 aa).

The region spanning 13–91 (NLPGVYRMIN…IKGFMPRYNV (79 aa)) is the GIY-YIG domain. The region spanning 200–235 (QQVMDELGEKMNEAAEKMEYELAAVYRDRIQSLRQV) is the UVR domain.

It belongs to the UvrC family. As to quaternary structure, interacts with UvrB in an incision complex.

Its subcellular location is the cytoplasm. In terms of biological role, the UvrABC repair system catalyzes the recognition and processing of DNA lesions. UvrC both incises the 5' and 3' sides of the lesion. The N-terminal half is responsible for the 3' incision and the C-terminal half is responsible for the 5' incision. This chain is UvrABC system protein C, found in Methylobacillus flagellatus (strain ATCC 51484 / DSM 6875 / VKM B-1610 / KT).